The following is a 315-amino-acid chain: Acetaldehyde dehydrogenase (315 aa).

An NAD(+)-binding site is contributed by 13–16 (SGNI). Cys-143 serves as the catalytic Acyl-thioester intermediate. NAD(+) is bound by residues 174-182 (SAGPGTRKN) and Asn-285.

Belongs to the acetaldehyde dehydrogenase family.

It catalyses the reaction acetaldehyde + NAD(+) + CoA = acetyl-CoA + NADH + H(+). The sequence is that of Acetaldehyde dehydrogenase from Shewanella woodyi (strain ATCC 51908 / MS32).